The chain runs to 105 residues: ATP-dependent Clp protease adapter protein ClpS (105 aa).

The protein belongs to the ClpS family. In terms of assembly, binds to the N-terminal domain of the chaperone ClpA.

Involved in the modulation of the specificity of the ClpAP-mediated ATP-dependent protein degradation. This is ATP-dependent Clp protease adapter protein ClpS from Klebsiella pneumoniae (strain 342).